Here is a 640-residue protein sequence, read N- to C-terminus: Putative solute carrier organic anion transporter family member 1B7 (640 aa).

Residues 1 to 16 (MKISTTQIERRFEISS) are Extracellular-facing. The chain crosses the membrane as a helical span at residues 17-37 (SLVGLIDGSFEIGNLFVIVFV). The Cytoplasmic portion of the chain corresponds to 38–49 (SYFGSKLHRPKL). The chain crosses the membrane as a helical span at residues 50 to 70 (IGIGCFLMGTGSILMALPHFF). The Extracellular segment spans residues 71–123 (MGYYRYSKETNIDPSENSTSNLPNCLINQMLSLNRTPSEIIERGCVKESGSHM). Residues 124 to 144 (WIYVFMGNMLRGIGETPIVPL) form a helical membrane-spanning segment. At 145–159 (GISYIDDFAKEGHSS) the chain is on the cytoplasmic side. The helical transmembrane segment at 160–180 (LYLGTVNVMGMTGLVFAFMLG) threads the bilayer. The Extracellular portion of the chain corresponds to 181–211 (SLFAKMYVDIGYVDLSTIRITPKDSRWVGAW). The chain crosses the membrane as a helical span at residues 212-232 (WLGFLVSGIVSIISSIPFFFL). Topologically, residues 233 to 292 (PLNPNKPQKERKVSLFLHVLKTNDKRNQIANLTNRRKYITKNVTGFFQSLKSILTNPLYV) are cytoplasmic. Ser246 is subject to Phosphoserine. A helical transmembrane segment spans residues 293-313 (IFVIFTLLHMSSYIASLTYII). At 314–329 (KMVEQQYGWSASKTNF) the chain is on the extracellular side. The chain crosses the membrane as a helical span at residues 330 to 350 (LLGVLALPAVAIGMFSGGYII). At 351-362 (KKFKLSLVGLAK) the chain is on the cytoplasmic side. The helical transmembrane segment at 363–383 (LAFCSATVHLLSQVLYFFLIC) threads the bilayer. Topologically, residues 384–492 (ESKSVAGLTL…CTRKSYVYFV (109 aa)) are extracellular. Residues 406–461 (DVPLSYCNSECNCDESQWEPVCGNNGITYLSPCLAGCKSSSGNKEPIVFYNCSCVE) enclose the Kazal-like domain. 3 disulfides stabilise this stretch: Cys412-Cys442, Cys418-Cys438, and Cys427-Cys459. A helical membrane pass occupies residues 493–513 (IQVLDAFLCAVGLTSYSVLVI). Residues 514 to 521 (RIVQPELK) lie on the Cytoplasmic side of the membrane. A helical membrane pass occupies residues 522–542 (ALAIGFHSMIMRSLGGILVPI). Residues 543–577 (YFGALIDTTCMKWSTNSCGARGACRIYNSTYLGRA) are Extracellular-facing. The chain crosses the membrane as a helical span at residues 578–598 (FFGLKVALIFPVLVLLTVFIF). The Cytoplasmic segment spans residues 599–640 (VVRKKSHGKDTKVLENERQVMDEANLEFLNDSEHFVPSAEEQ). Position 636 is a phosphoserine (Ser636).

The protein belongs to the organo anion transporter (TC 2.A.60) family.

The protein localises to the cell membrane. The chain is Putative solute carrier organic anion transporter family member 1B7 (SLCO1B7) from Homo sapiens (Human).